A 338-amino-acid chain; its full sequence is Glyceraldehyde-3-phosphate dehydrogenase 2 (338 aa).

Residues 12–13 (RI), Asp34, and Arg79 each bind NAD(+). D-glyceraldehyde 3-phosphate-binding positions include 150–152 (SCT), Thr181, 210–211 (TG), and Arg233. Residue Cys151 is the Nucleophile of the active site. Residue Asn315 participates in NAD(+) binding.

The protein belongs to the glyceraldehyde-3-phosphate dehydrogenase family. As to quaternary structure, homotetramer.

Its subcellular location is the cytoplasm. The enzyme catalyses D-glyceraldehyde 3-phosphate + phosphate + NAD(+) = (2R)-3-phospho-glyceroyl phosphate + NADH + H(+). It participates in carbohydrate degradation; glycolysis; pyruvate from D-glyceraldehyde 3-phosphate: step 1/5. The polypeptide is Glyceraldehyde-3-phosphate dehydrogenase 2 (GPD2) (Mucor circinelloides f. lusitanicus (Mucor racemosus var. lusitanicus)).